The sequence spans 195 residues: HTH-type transcriptional regulator BetI (195 aa).

The 61-residue stretch at glutamate 8 to leucine 68 folds into the HTH tetR-type domain. A DNA-binding region (H-T-H motif) is located at residues threonine 31 to phenylalanine 50.

Its pathway is amine and polyamine biosynthesis; betaine biosynthesis via choline pathway [regulation]. In terms of biological role, repressor involved in the biosynthesis of the osmoprotectant glycine betaine. It represses transcription of the choline transporter BetT and the genes of BetAB involved in the synthesis of glycine betaine. In Paraburkholderia phytofirmans (strain DSM 17436 / LMG 22146 / PsJN) (Burkholderia phytofirmans), this protein is HTH-type transcriptional regulator BetI.